Reading from the N-terminus, the 107-residue chain is Cytochrome c2 (107 aa).

Heme c contacts are provided by Cys14, Cys17, His18, and Met80.

The protein belongs to the cytochrome c family. Binds 1 heme c group covalently per subunit.

In terms of biological role, cytochrome c2 is found mainly in purple, non-sulfur, photosynthetic bacteria where it functions as the electron donor to the oxidized bacteriochlorophyll in the photophosphorylation pathway. However, it may also have a role in the respiratory chain and is found in some non-photosynthetic bacteria. The chain is Cytochrome c2 from Rhodoblastus acidophilus (Rhodopseudomonas acidophila).